A 96-amino-acid polypeptide reads, in one-letter code: Salivary protein FS50 (96 aa).

A signal peptide spans Met-1–Ser-19. 4 disulfide bridges follow: Cys-26-Cys-71, Cys-50-Cys-78, Cys-63-Cys-91, and Cys-67-Cys-93.

Its subcellular location is the secreted. Salivary protein that inhibits host voltage-gated sodium channel Nav1.5/SCN5A. In Xenopsylla cheopis (Oriental rat flea), this protein is Salivary protein FS50.